The primary structure comprises 106 residues: Small ribosomal subunit protein bS16 (106 aa).

Belongs to the bacterial ribosomal protein bS16 family.

This is Small ribosomal subunit protein bS16 from Wolbachia sp. subsp. Brugia malayi (strain TRS).